Here is a 458-residue protein sequence, read N- to C-terminus: V-type ATP synthase beta chain (458 aa).

Belongs to the ATPase alpha/beta chains family.

In terms of biological role, produces ATP from ADP in the presence of a proton gradient across the membrane. The V-type beta chain is a regulatory subunit. This chain is V-type ATP synthase beta chain, found in Enterococcus faecalis (strain ATCC 700802 / V583).